Consider the following 535-residue polypeptide: cAMP-regulated D2 protein (535 aa).

Positions 1–20 (MNKLLVFILLLLLLINISFA) are cleaved as a signal peptide. Cys89 and Cys109 are joined by a disulfide. The active-site Acyl-ester intermediate is the Ser213. A disulfide bridge connects residues Cys265 and Cys272. Catalysis depends on charge relay system residues Glu338 and His440. The N-linked (GlcNAc...) asparagine glycan is linked to Asn500.

This sequence belongs to the type-B carboxylesterase/lipase family.

The protein localises to the cytoplasmic vesicle. The protein resides in the esterosome membrane. The protein is cAMP-regulated D2 protein (D2) of Dictyostelium discoideum (Social amoeba).